Consider the following 151-residue polypeptide: uncharacterized protein (151 aa).

[4Fe-4S] cluster contacts are provided by Cys-24, Cys-27, Cys-92, and Cys-129.

The protein belongs to the complex I 20 kDa subunit family. [4Fe-4S] cluster is required as a cofactor.

This is an uncharacterized protein from Methanocaldococcus jannaschii (strain ATCC 43067 / DSM 2661 / JAL-1 / JCM 10045 / NBRC 100440) (Methanococcus jannaschii).